Reading from the N-terminus, the 180-residue chain is Inner membrane-spanning protein YciB (180 aa).

The next 5 helical transmembrane spans lie at 11–31 (ILFFVVYKLAGIREAAIALII), 52–72 (IIMGIAVVFFGTLTAYFNKVE), 76–96 (WKVTIVYALFALILLISQYGF), 121–141 (LAWAGFFILCMLINIYISQYC), and 149–169 (FKSFGIIAMTFIATLFTGIYV).

It belongs to the YciB family.

It is found in the cell inner membrane. Functionally, plays a role in cell envelope biogenesis, maintenance of cell envelope integrity and membrane homeostasis. This Mannheimia succiniciproducens (strain KCTC 0769BP / MBEL55E) protein is Inner membrane-spanning protein YciB.